The chain runs to 567 residues: Protein NRT1/ PTR FAMILY 4.5 (567 aa).

12 helical membrane passes run 30–50, 70–92, 99–118, 147–167, 189–209, 219–239, 326–346, 374–394, 411–431, 448–468, 491–511, and 535–555; these read GMLA…AFLA, SSSE…GFLA, FVIF…LLTI, AFLF…KGSL, FFNY…TFVV, WGFG…LLGS, IVLK…CLAQ, VFPV…IIPF, IGVG…VELK, LPIT…ADLF, SLSW…VPIV, and LFYW…LFWA.

It belongs to the major facilitator superfamily. Proton-dependent oligopeptide transporter (POT/PTR) (TC 2.A.17) family. In terms of tissue distribution, expressed in flowers and siliques.

It is found in the membrane. Functionally, involved in abscisic acid transport. The protein is Protein NRT1/ PTR FAMILY 4.5 (NPF4.5) of Arabidopsis thaliana (Mouse-ear cress).